The following is a 413-amino-acid chain: Serine/threonine-protein kinase ppk27 (413 aa).

Positions 102-403 constitute a Protein kinase domain; that stretch reads WSINTKITST…LKDFNKHGNF (302 aa). Residues 108–116 and K133 contribute to the ATP site; that span reads ITSTEQREV. The Proton acceptor role is filled by D231.

The protein belongs to the protein kinase superfamily. Ser/Thr protein kinase family.

The protein resides in the cytoplasm. The enzyme catalyses L-seryl-[protein] + ATP = O-phospho-L-seryl-[protein] + ADP + H(+). It carries out the reaction L-threonyl-[protein] + ATP = O-phospho-L-threonyl-[protein] + ADP + H(+). This Schizosaccharomyces pombe (strain 972 / ATCC 24843) (Fission yeast) protein is Serine/threonine-protein kinase ppk27 (ppk27).